The primary structure comprises 650 residues: MICOS complex subunit MIC60, mitochondrial (650 aa).

The N-terminal 34 residues, 1 to 34 (MLRKSVLELSSRLSIKRFPRNLGAQRFHLSSSRN), are a transit peptide targeting the mitochondrion. A disordered region spans residues 26–74 (RFHLSSSRNASTSGKNGLPGAKPVGKPDASKVDPPKVTPPPPTKGNSSK). The segment covering 28-40 (HLSSSRNASTSGK) has biased composition (polar residues). Over 35–74 (ASTSGKNGLPGAKPVGKPDASKVDPPKVTPPPPTKGNSSK) the chain is Mitochondrial matrix. A helical membrane pass occupies residues 75-95 (VVIGGVAIAGAFLVAYQTGYL). The Mitochondrial intermembrane segment spans residues 96–549 (DQYLGKEQQK…FDTLKGTLRH (454 aa)). Disordered regions lie at residues 121–168 (EAHH…ESDL), 239–267 (QSSSVHRESETESASPKDPAALKTPEDGI), and 284–304 (EGSDTESTGSSSIGEQITKET). Over residues 284-299 (EGSDTESTGSSSIGEQ) the composition is skewed to low complexity. 2 coiled-coil regions span residues 345–369 (AQVFAEELRALKEKYENELRDLRAR) and 396–430 (KAIQERMEDKLKAELEQKETEAQLALSKAEELAKA). The chain crosses the membrane as a helical span at residues 550-570 (FSLIPPGGGGILAHSLAHVAS). The Mitochondrial matrix portion of the chain corresponds to 571-650 (SLKFKEVDQA…QSYATCVSLT (80 aa)).

The protein belongs to the MICOS complex subunit Mic60 family. Component of the mitochondrial contact site and cristae organizing system (MICOS) complex. The MICOS complex associates with mitochondrial outer membrane proteins. Present in a large lipid-enriched complex called mitochondrial transmembrane lipoprotein (MTL) complex made of proteins located in the two mitochondrial membranes, including the TOM complex and the core components of the MICOS complex and containing at least digalactosyldiacylglycerol (DGDG). Binds to TOM40-1. Component of a mitochondrial large protein complex that contains, at least, MIC60, DGS1, TOM40, TOM20 proteins, and petC/RISP.

It localises to the mitochondrion inner membrane. Component of the MICOS complex, a large protein complex of the mitochondrial inner membrane that plays crucial roles in the maintenance of crista junctions, inner membrane architecture, and formation of contact sites to the outer membrane. Plays a role in keeping cristae membranes connected to the inner boundary membrane. Also promotes protein import via the mitochondrial intermembrane space assembly (MIA) pathway. Involved in the maintenance of mitochondria morphology. Binds to glycerolipids such as cardiolipin (CL). Contributes to the export of phosphatidylethanolamine (PE) from mitochondria and to the import of galactoglycerolipids from plastids during phosphate (Pi) starvation. Promotes lipid desorption from membranes, likely as an initial step for lipid transfer, and regulates probably the tethering between the inner and outer membranes of mitochondria by binding to TOM40 proteins. This is MICOS complex subunit MIC60, mitochondrial from Arabidopsis thaliana (Mouse-ear cress).